The primary structure comprises 151 residues: Large ribosomal subunit protein bL9 (151 aa).

Belongs to the bacterial ribosomal protein bL9 family.

Binds to the 23S rRNA. The sequence is that of Large ribosomal subunit protein bL9 from Nitrosococcus oceani (strain ATCC 19707 / BCRC 17464 / JCM 30415 / NCIMB 11848 / C-107).